A 717-amino-acid polypeptide reads, in one-letter code: DNA polymerase iota (717 aa).

The disordered stretch occupies residues 1 to 22 (MEPLHAGAAGSSRAVCSQGPPT). Residues 30–243 (IVHVDLDCFY…NHIKEIPGIG (214 aa)) enclose the UmuC domain. Mg(2+) is bound by residues Asp-34 and Leu-35. A 2'-deoxyribonucleoside 5'-triphosphate contacts are provided by Tyr-39 and Arg-71. Asp-126 contacts Mg(2+). Glu-127 serves as the catalytic Proton acceptor. 2 DNA-binding regions span residues 300–307 (QSFSEEDT) and 343–360 (RLVIRRYSDKHCNRESRQ). The Ubiquitin-binding 1 (UBM1) motif lies at 500 to 517 (VDQEVFKQLPADIQEEIL). Disordered regions lie at residues 549-589 (QMQA…SHPS), 603-622 (KDEQTSQGPTESQGCQFSST), and 644-687 (HRTV…DIDP). The span at 575–589 (PGTSGLSPGSTSHPS) shows a compositional bias: low complexity. Composition is skewed to polar residues over residues 607 to 622 (TSQGPTESQGCQFSST) and 652 to 662 (QTATASHQGLE). The segment covering 665-679 (QGLESRELDSAEEKL) has biased composition (basic and acidic residues). Residues 685–702 (IDPQVFYELPEEVQKELM) carry the Ubiquitin-binding 2 (UBM2) motif.

It belongs to the DNA polymerase type-Y family. Interacts with POLH. Interacts with REV1. Interacts with ubiquitin. It depends on Mg(2+) as a cofactor. Mn(2+) is required as a cofactor. Post-translationally, monoubiquitinated. Protein monoubiquitination prevents POLI binding to ubiquitin via the ubiquitin-binding motif 1 and ubiquitin-binding motif 2. As to expression, detected in testis, and at very low levels in spleen, lung and brain. Detected in round spermatids, but not in prophase spermatocytes.

Its subcellular location is the nucleus. It catalyses the reaction DNA(n) + a 2'-deoxyribonucleoside 5'-triphosphate = DNA(n+1) + diphosphate. Functionally, error-prone DNA polymerase specifically involved in DNA repair. Plays an important role in translesion synthesis, where the normal high-fidelity DNA polymerases cannot proceed and DNA synthesis stalls. Favors Hoogsteen base-pairing in the active site. Inserts the correct base with high-fidelity opposite an adenosine template. Exhibits low fidelity and efficiency opposite a thymidine template, where it will preferentially insert guanosine. May play a role in hypermutation of immunoglobulin genes. Forms a Schiff base with 5'-deoxyribose phosphate at abasic sites, but may not have lyase activity. The protein is DNA polymerase iota (Poli) of Mus musculus (Mouse).